The chain runs to 454 residues: Nuclear envelope integral membrane protein (454 aa).

Positions 1–18 (MHSAGLLMLTVAGYFTSG) are cleaved as a signal peptide. The N-linked (GlcNAc...) asparagine glycan is linked to Asn-38. Helical transmembrane passes span 138–158 (IPLD…LFSA), 166–186 (VFYY…VVIY), 197–217 (MMYG…KQLA), 231–251 (VLGY…RIGP), and 280–300 (TSAV…PISW). The segment covering 388–405 (SMDAAPEEESVEEPEEDK) has biased composition (acidic residues). The interval 388-454 (SMDAAPEEES…QEVDLRQVVQ (67 aa)) is disordered. Positions 414–424 (NSQFRYQQAAR) are enriched in polar residues. Residues 428 to 446 (PEPESESDDSEEEEFFEQE) are compositionally biased toward acidic residues.

Belongs to the NEMP family. In terms of assembly, interacts with OTE. Expressed in both germline and somatic cells in the larval testis and prepupal ovary (at protein level). Also detected in the larval eye and larval wing disk (at protein level).

The protein resides in the nucleus inner membrane. Contributes to nuclear envelope stiffness in germ cells. Required for male and female fertility. The sequence is that of Nuclear envelope integral membrane protein from Drosophila melanogaster (Fruit fly).